The sequence spans 827 residues: Cell surface glycoprotein (827 aa).

A signal peptide spans 1-34 (MTKLKDQTRAILLATLMVTSVFAGAIAFTGSAAA). Asn47 carries N-linked (Glc...) asparagine glycosylation. Residues 73–102 (PLLTGTAGNSEGVSLDLSSPIPQTTENQPL) are compositionally biased toward polar residues. The tract at residues 73–111 (PLLTGTAGNSEGVSLDLSSPIPQTTENQPLGTYDVDGSG) is disordered. 5 N-linked (Glc...) asparagine glycosylation sites follow: Asn117, Asn308, Asn313, Asn532, and Asn766. The disordered stretch occupies residues 755-804 (SEREDTTTSSDNATDTTTTTDGPTETTTTAEPTETTEEPTEETTTSSNTP). Residues 761–787 (TTSSDNATDTTTTTDGPTETTTTAEPT) show a composition bias toward low complexity. Residues 804–806 (PGF) carry the PGF sorting signal motif. Residues 804–823 (PGFGIAVALVALVGAALLAL) traverse the membrane as a helical segment.

It belongs to the halobacterial S-layer protein family. In terms of processing, O-glycosylated on 4 to 6 threonine residues; glycans consist of Glc-Gal disaccharides. Post-translationally, the N-terminus is not blocked. Cleaved by the archaeosortase ArtA at the C-terminus, with removal of a short hydrophobic segment. In terms of processing, lipidation: Following protein translocation across the membrane, the protein is modified by a derivative of mevalonic acid. Lipid modification is ArtA-dependent and requires the conserved C-terminal PGF motif. Post-translationally, asn-47 and Asn-117 are glycosylated by a pentasaccharide comprising a hexose, 2 hexuronic acids, a methyl ester of a hexuronic acid and mannose. The pentasaccharide is produced in 2 steps: first, a tetrasaccharide is built on dolichol-P and then transferred to the S-layer glycoprotein. Then, the mannose fifth sugar is attached to a distinct molecule of dolichol-P and is transferred to the protein already carrying the tetrasaccharide. The pentasaccharide on Asn-47 was initially thought to contain mannose, galactose, glucose and idose with a relative ratio of 1/3/3/0.2. However, it was later shown that it is not the case. Under low-salt conditions (1.75 M instead of 3.4 M), a tetrasaccharide consisting of a sulfated hexose, 2 hexoses and rhamnose is attached to Asn-532.

It is found in the secreted. Its subcellular location is the cell wall. It localises to the S-layer. The protein resides in the cell membrane. Its function is as follows. S-layer protein. The S-layer is a paracrystalline mono-layered assembly of proteins which coat the surface of the cell. This Haloferax volcanii (strain ATCC 29605 / DSM 3757 / JCM 8879 / NBRC 14742 / NCIMB 2012 / VKM B-1768 / DS2) (Halobacterium volcanii) protein is Cell surface glycoprotein (csg).